The following is a 434-amino-acid chain: Nuclear receptor subfamily 1 group I member 2 (434 aa).

Positions 38–107 form a DNA-binding region, nuclear receptor; that stretch reads PQICRVCGDK…RLRKCLESGM (70 aa). 2 consecutive NR C4-type zinc fingers follow at residues 41-61 and 77-102; these read CRVC…CEGC and CPFR…LRKC. The Bipartite nuclear localization signal signature appears at 66–92; sequence RRAMKRNARLRCPFRKGACEITRKTRR. The segment at 108-145 is hinge; that stretch reads KKEMIMSDEAVEERRALIKRKKSERTGTQPLGVQGLTE. Residues 146–433 form the NR LBD domain; it reads EQRMMIRELM…LMQELFGITG (288 aa). Hyperforin-binding positions include Ser-247, 285-288, and His-407; that span reads QLRF.

This sequence belongs to the nuclear hormone receptor family. NR1 subfamily. As to quaternary structure, heterodimer with RXR. Interacts with NCOA1. Interacts (via domain NR LBD) with CRY1 and CRY2 in a ligand-dependent manner. Expressed in liver, colon and small intestine.

The protein resides in the nucleus. Functionally, nuclear receptor that binds and is activated by variety of endogenous and xenobiotic compounds. Transcription factor that activates the transcription of multiple genes involved in the metabolism and secretion of potentially harmful xenobiotics, drugs and endogenous compounds. Activated by the antibiotic rifampicin and various plant metabolites, such as hyperforin, guggulipid, colupulone, and isoflavones. Response to specific ligands is species-specific. Activated by naturally occurring steroids, such as pregnenolone and progesterone. Binds to a response element in the promoters of the CYP3A4 and ABCB1/MDR1 genes. The sequence is that of Nuclear receptor subfamily 1 group I member 2 (NR1I2) from Homo sapiens (Human).